Here is a 248-residue protein sequence, read N- to C-terminus: 2,3-bisphosphoglycerate-dependent phosphoglycerate mutase (248 aa).

Residues 8 to 15, 21 to 22, Arg60, 87 to 90, Lys98, 114 to 115, and 183 to 184 each bind substrate; these read RHGESEWN, TG, ERHY, RR, and GN. The Tele-phosphohistidine intermediate role is filled by His9. Glu87 acts as the Proton donor/acceptor in catalysis.

Belongs to the phosphoglycerate mutase family. BPG-dependent PGAM subfamily.

The enzyme catalyses (2R)-2-phosphoglycerate = (2R)-3-phosphoglycerate. The protein operates within carbohydrate degradation; glycolysis; pyruvate from D-glyceraldehyde 3-phosphate: step 3/5. In terms of biological role, catalyzes the interconversion of 2-phosphoglycerate and 3-phosphoglycerate. This chain is 2,3-bisphosphoglycerate-dependent phosphoglycerate mutase, found in Borreliella burgdorferi (strain ATCC 35210 / DSM 4680 / CIP 102532 / B31) (Borrelia burgdorferi).